The following is a 408-amino-acid chain: Histidine--tRNA ligase (408 aa).

This sequence belongs to the class-II aminoacyl-tRNA synthetase family. Homodimer.

It is found in the cytoplasm. The catalysed reaction is tRNA(His) + L-histidine + ATP = L-histidyl-tRNA(His) + AMP + diphosphate + H(+). The chain is Histidine--tRNA ligase from Campylobacter jejuni subsp. jejuni serotype O:6 (strain 81116 / NCTC 11828).